We begin with the raw amino-acid sequence, 332 residues long: Casein kinase II subunit alpha (332 aa).

One can recognise a Protein kinase domain in the interval 43–327 (YEIIRKVGRG…TCQEAMAHPY (285 aa)). ATP-binding positions include 49–57 (VGRGKYSEV) and K72. D160 serves as the catalytic Proton acceptor.

This sequence belongs to the protein kinase superfamily. Ser/Thr protein kinase family. CK2 subfamily. In terms of assembly, tetramer composed of two alpha chains, one beta chain and one beta' chain.

It carries out the reaction L-seryl-[protein] + ATP = O-phospho-L-seryl-[protein] + ADP + H(+). It catalyses the reaction L-threonyl-[protein] + ATP = O-phospho-L-threonyl-[protein] + ADP + H(+). Functionally, catalytic subunit of a constitutively active serine/threonine-protein kinase complex that phosphorylates a large number of substrates containing acidic residues C-terminal to the phosphorylated serine or threonine. The sequence is that of Casein kinase II subunit alpha from Schizosaccharomyces pombe (strain 972 / ATCC 24843) (Fission yeast).